The chain runs to 135 residues: Small ribosomal subunit protein uS11 (135 aa).

It belongs to the universal ribosomal protein uS11 family. In terms of assembly, part of the 30S ribosomal subunit. Interacts with proteins S7 and S18. Binds to IF-3.

In terms of biological role, located on the platform of the 30S subunit, it bridges several disparate RNA helices of the 16S rRNA. Forms part of the Shine-Dalgarno cleft in the 70S ribosome. The sequence is that of Small ribosomal subunit protein uS11 from Polynucleobacter necessarius subsp. necessarius (strain STIR1).